A 782-amino-acid polypeptide reads, in one-letter code: Endonuclease MutS2 (782 aa).

336–343 is a binding site for ATP; the sequence is GPNTGGKT. One can recognise a Smr domain in the interval 707-782; that stretch reads LDLRGYRYED…GFGVTVATLK (76 aa).

It belongs to the DNA mismatch repair MutS family. MutS2 subfamily. Homodimer. Binds to stalled ribosomes, contacting rRNA.

Functionally, endonuclease that is involved in the suppression of homologous recombination and thus may have a key role in the control of bacterial genetic diversity. Acts as a ribosome collision sensor, splitting the ribosome into its 2 subunits. Detects stalled/collided 70S ribosomes which it binds and splits by an ATP-hydrolysis driven conformational change. Acts upstream of the ribosome quality control system (RQC), a ribosome-associated complex that mediates the extraction of incompletely synthesized nascent chains from stalled ribosomes and their subsequent degradation. Probably generates substrates for RQC. This is Endonuclease MutS2 from Staphylococcus aureus (strain MSSA476).